The chain runs to 446 residues: Palmitoyltransferase PFA4 (446 aa).

Residues 1-8 (MAVQLKWP) are Cytoplasmic-facing. Residues 9–29 (ILGVIIPCIIIFSLSYGSHYF) traverse the membrane as a helical segment. Residues 30-40 (ILRHHLTMKQQ) are Lumenal-facing. A helical membrane pass occupies residues 41–61 (LIYEFYVTMIWISYLLAIYTN). Over 62–161 (PGRVPKNYKP…GNNNLPHFMR (100 aa)) the chain is Cytoplasmic. The 51-residue stretch at 114–164 (RYCKKCNNYKPPRSHHCKICQQCVLQMDHHCPWTLNCVGNNNLPHFMRFLG) folds into the DHHC domain. The active-site S-palmitoyl cysteine intermediate is the Cys-144. A helical transmembrane segment spans residues 162-182 (FLGWIIWGTGYLMIQLIKLII). The Lumenal segment spans residues 183-201 (NYYENSNMPHYLFNKTELV). Residues 202–222 (AIIAITPLNFFVFASILVLFI) form a helical membrane-spanning segment. Over 223–446 (RCLINICKGM…TDFGVDEDSD (224 aa)) the chain is Cytoplasmic.

The protein belongs to the DHHC palmitoyltransferase family. PFA4 subfamily.

Its subcellular location is the endoplasmic reticulum membrane. It carries out the reaction L-cysteinyl-[protein] + hexadecanoyl-CoA = S-hexadecanoyl-L-cysteinyl-[protein] + CoA. In terms of biological role, mediates the reversible addition of palmitate to target proteins, thereby regulating their membrane association and biological function. The sequence is that of Palmitoyltransferase PFA4 from Candida albicans (strain SC5314 / ATCC MYA-2876) (Yeast).